The primary structure comprises 497 residues: Probable cytosol aminopeptidase (497 aa).

Residues K267 and D272 each contribute to the Mn(2+) site. K279 is an active-site residue. Residues D290, D349, and E351 each coordinate Mn(2+). The active site involves R353.

The protein belongs to the peptidase M17 family. The cofactor is Mn(2+).

It is found in the cytoplasm. The enzyme catalyses Release of an N-terminal amino acid, Xaa-|-Yaa-, in which Xaa is preferably Leu, but may be other amino acids including Pro although not Arg or Lys, and Yaa may be Pro. Amino acid amides and methyl esters are also readily hydrolyzed, but rates on arylamides are exceedingly low.. It catalyses the reaction Release of an N-terminal amino acid, preferentially leucine, but not glutamic or aspartic acids.. In terms of biological role, presumably involved in the processing and regular turnover of intracellular proteins. Catalyzes the removal of unsubstituted N-terminal amino acids from various peptides. The sequence is that of Probable cytosol aminopeptidase from Syntrophotalea carbinolica (strain DSM 2380 / NBRC 103641 / GraBd1) (Pelobacter carbinolicus).